The following is a 509-amino-acid chain: MFS antiporter QDR1 (509 aa).

The Cytoplasmic portion of the chain corresponds to 1-41 (MPGNREEFDIEKVLKSKKLEAIETSTEKKAPYTVFESTDKL). The chain crosses the membrane as a helical span at residues 42–62 (LLIIVLSLVGFWSAISSPIYF). At 63-75 (PALPTLTKYFNTT) the chain is on the extracellular side. A helical membrane pass occupies residues 76–96 (PSVMNISVVAYLIFQGIAPTI). The Cytoplasmic segment spans residues 97 to 106 (SSNLADTFGR). Residues 107-129 (RPVILGSIIVFCAVCIAISQTNV) form a helical membrane-spanning segment. At 130–132 (YWL) the chain is on the extracellular side. Residues 133–155 (LALLRCFQAAGIAPVFAISSGVA) traverse the membrane as a helical segment. Topologically, residues 156 to 169 (GDICTPANRGGMVG) are cytoplasmic. The helical transmembrane segment at 170–190 (AVSGLQLAGNGIGGLVGAALI) threads the bilayer. Over 191–197 (SGFHTWR) the chain is Extracellular. The chain crosses the membrane as a helical span at residues 198 to 218 (AIFIFLAIGGGVTFIFAFLVL). Over 219–278 (AETSRRIVGNGSIRPKNVLNKAVLIYLPHFKNKITNDYSTLQPKGPFDILGPFKIFFQKE) the chain is Cytoplasmic. A helical transmembrane segment spans residues 279–299 (VFCTLLPSGMHFAAWTVSLTS). Over 300–312 (LSTELESAKYNYS) the chain is Extracellular. The helical transmembrane segment at 313 to 333 (VMKVGLVYLPQGIACFIGSLI) threads the bilayer. The Cytoplasmic segment spans residues 334–370 (AGRCLNWYYRYRKNLYDKQMNDVPLNDRPPFNLVASR). The helical transmembrane segment at 371 to 391 (LTLTIVPLAMMVIGLSAFGWC) threads the bilayer. The Extracellular portion of the chain corresponds to 392 to 397 (LEYKKP). Residues 398-418 (IISIIISTILISFSASVMMSI) form a helical membrane-spanning segment. Over 419–432 (CTTMLVDLYPKQSG) the chain is Cytoplasmic. The helical transmembrane segment at 433 to 453 (ASASCVNLMRCWLAALFTGVL) threads the bilayer. Over 454-455 (DK) the chain is Extracellular. The chain crosses the membrane as a helical span at residues 456 to 476 (IISALGLGGTYTLLTGICLLT). The Cytoplasmic portion of the chain corresponds to 477–509 (DLGLVYVLYTANQRFVNYVSPNQTAVNSDAEDY).

The protein belongs to the major facilitator superfamily. CAR1 family.

The protein resides in the cell membrane. MFS antiporter that does not display functional linkage as drug transporter and performs functions that significantly affect biofilm development and virulence. No substrate for transport has been identified yet, but plays an important role in the growth in the host. This Candida albicans (strain SC5314 / ATCC MYA-2876) (Yeast) protein is MFS antiporter QDR1 (QDR).